Reading from the N-terminus, the 232-residue chain is U2 small nuclear ribonucleoprotein B'' (232 aa).

The 80-residue stretch at 10-89 folds into the RRM 1 domain; sequence QTVYLRNLNE…KRMRVQYAKT (80 aa). The tract at residues 90-159 is disordered; it reads RSDCLATEDG…QEPPAPPNNI (70 aa). Over residues 108–123 the composition is skewed to basic and acidic residues; that stretch reads KKQEEKAAEKKRRAEE. A compositionally biased stretch (polar residues) spans 127–151; that stretch reads SGPNAAAQSNGTGYQASRLGKTSQE. Residues 158 to 232 form the RRM 2 domain; the sequence is NILFIQNLPA…NPMAISYAKK (75 aa).

This sequence belongs to the RRM U1 A/B'' family. As to quaternary structure, component of the spliceosome where it is associated with snRNP U2.

It is found in the nucleus. It localises to the cajal body. Its subcellular location is the nucleoplasm. The protein resides in the cytoplasm. Functionally, involved in nuclear pre-mRNA splicing. The polypeptide is U2 small nuclear ribonucleoprotein B'' (Oryza sativa subsp. japonica (Rice)).